The chain runs to 154 residues: Ribonuclease H (154 aa).

One can recognise an RNase H type-1 domain in the interval 1–142 (MTKQVEIFTD…CDELARQGAN (142 aa)). Asp-10, Glu-48, Asp-70, and Asp-134 together coordinate Mg(2+).

The protein belongs to the RNase H family. As to quaternary structure, monomer. Mg(2+) is required as a cofactor.

Its subcellular location is the cytoplasm. The enzyme catalyses Endonucleolytic cleavage to 5'-phosphomonoester.. Endonuclease that specifically degrades the RNA of RNA-DNA hybrids. The polypeptide is Ribonuclease H (Yersinia pestis bv. Antiqua (strain Antiqua)).